The primary structure comprises 313 residues: Adhesin MafA 2 (313 aa).

A signal peptide spans 1–14; sequence MKTLLLLIPLVLTA. Cysteine 15 carries the N-palmitoyl cysteine lipid modification. A lipid anchor (S-diacylglycerol cysteine) is attached at cysteine 15. Residues 282 to 297 show a composition bias toward polar residues; the sequence is GDTTAQNRPDFKQNNG. Residues 282 to 313 form a disordered region; it reads GDTTAQNRPDFKQNNGKKPDVGNEVIRRRKGG.

It belongs to the MafA family.

The protein resides in the cell outer membrane. The sequence is that of Adhesin MafA 2 (mafA2) from Neisseria meningitidis serogroup C / serotype 2a (strain ATCC 700532 / DSM 15464 / FAM18).